Reading from the N-terminus, the 149-residue chain is D-aminoacyl-tRNA deacylase (149 aa).

The Gly-cisPro motif, important for rejection of L-amino acids signature appears at 137–138 (GP).

It belongs to the DTD family. Homodimer.

The protein localises to the cytoplasm. It carries out the reaction glycyl-tRNA(Ala) + H2O = tRNA(Ala) + glycine + H(+). The catalysed reaction is a D-aminoacyl-tRNA + H2O = a tRNA + a D-alpha-amino acid + H(+). In terms of biological role, an aminoacyl-tRNA editing enzyme that deacylates mischarged D-aminoacyl-tRNAs. Also deacylates mischarged glycyl-tRNA(Ala), protecting cells against glycine mischarging by AlaRS. Acts via tRNA-based rather than protein-based catalysis; rejects L-amino acids rather than detecting D-amino acids in the active site. By recycling D-aminoacyl-tRNA to D-amino acids and free tRNA molecules, this enzyme counteracts the toxicity associated with the formation of D-aminoacyl-tRNA entities in vivo and helps enforce protein L-homochirality. The protein is D-aminoacyl-tRNA deacylase of Syntrophobacter fumaroxidans (strain DSM 10017 / MPOB).